A 127-amino-acid chain; its full sequence is NHP2-like protein 1 homolog (127 aa).

This sequence belongs to the eukaryotic ribosomal protein eL8 family.

Its subcellular location is the nucleus. The protein localises to the nucleolus. Its function is as follows. Binds to the 5'-stem-loop of U4 snRNA and may play a role in the late stage of spliceosome assembly. The protein undergoes a conformational change upon RNA-binding. In Drosophila melanogaster (Fruit fly), this protein is NHP2-like protein 1 homolog (hoip).